We begin with the raw amino-acid sequence, 296 residues long: Alpha/beta-gliadin clone PW1215 (296 aa).

The signal sequence occupies residues 1-20 (MKTFLILALLAIVATTATTA). 2 disordered regions span residues 24 to 126 (PVPQ…QAQQ) and 220 to 255 (SSQV…VQPQ). Positions 25-36 (VPQPQPQNPSQP) are enriched in pro residues. The segment covering 37–58 (QPQGQVPLVQQQQFPGQQQQFP) has biased composition (low complexity). 2 stretches are compositionally biased toward pro residues: residues 59-71 (PQQP…PFPS) and 81-116 (FPQP…PQPQ). Composition is skewed to low complexity over residues 117 to 126 (QPISQQQAQQ) and 220 to 241 (SSQV…FFQP). Polar residues predominate over residues 242–255 (SQQNPQAQGSVQPQ).

Belongs to the gliadin/glutenin family. Post-translationally, substrate of transglutaminase.

Its function is as follows. Gliadin is the major seed storage protein in wheat. The protein is Alpha/beta-gliadin clone PW1215 of Triticum aestivum (Wheat).